The following is a 493-amino-acid chain: Glutamyl-tRNA(Gln) amidotransferase subunit A (493 aa).

Active-site charge relay system residues include Lys78 and Ser158. Ser182 (acyl-ester intermediate) is an active-site residue.

Belongs to the amidase family. GatA subfamily. Heterotrimer of A, B and C subunits.

It carries out the reaction L-glutamyl-tRNA(Gln) + L-glutamine + ATP + H2O = L-glutaminyl-tRNA(Gln) + L-glutamate + ADP + phosphate + H(+). Functionally, allows the formation of correctly charged Gln-tRNA(Gln) through the transamidation of misacylated Glu-tRNA(Gln) in organisms which lack glutaminyl-tRNA synthetase. The reaction takes place in the presence of glutamine and ATP through an activated gamma-phospho-Glu-tRNA(Gln). The sequence is that of Glutamyl-tRNA(Gln) amidotransferase subunit A from Rickettsia conorii (strain ATCC VR-613 / Malish 7).